The primary structure comprises 337 residues: Anthranilate phosphoribosyltransferase (337 aa).

Residues G81, 84-85, T89, 91-94, 109-117, and T121 contribute to the 5-phospho-alpha-D-ribose 1-diphosphate site; these read GD, NIST, and KHGNRALSS. G81 lines the anthranilate pocket. Mg(2+) is bound at residue S93. N112 lines the anthranilate pocket. R167 contributes to the anthranilate binding site. Positions 225 and 226 each coordinate Mg(2+).

Belongs to the anthranilate phosphoribosyltransferase family. Homodimer. Mg(2+) is required as a cofactor.

It carries out the reaction N-(5-phospho-beta-D-ribosyl)anthranilate + diphosphate = 5-phospho-alpha-D-ribose 1-diphosphate + anthranilate. It functions in the pathway amino-acid biosynthesis; L-tryptophan biosynthesis; L-tryptophan from chorismate: step 2/5. Its function is as follows. Catalyzes the transfer of the phosphoribosyl group of 5-phosphorylribose-1-pyrophosphate (PRPP) to anthranilate to yield N-(5'-phosphoribosyl)-anthranilate (PRA). The polypeptide is Anthranilate phosphoribosyltransferase (Rhizobium meliloti (strain 1021) (Ensifer meliloti)).